The primary structure comprises 469 residues: Pancreatic lipase-related protein 2 (469 aa).

The N-terminal stretch at 1–17 is a signal peptide; that stretch reads MLPSWTIGLLLLATVRG. A disulfide bridge links Cys21 with Cys27. Asn71 carries N-linked (GlcNAc...) asparagine glycosylation. The interval 93 to 105 is required for galactolipase activity; it reads IHGFIDDGDSGWP. The cysteines at positions 109 and 120 are disulfide-linked. Ser171 functions as the Nucleophile in the catalytic mechanism. The active-site Charge relay system is the Asp195. Positions 206, 209, 211, and 214 each coordinate Ca(2+). Residues Cys256 and Cys280 are joined by a disulfide bond. A required for galactolipase activity region spans residues 257-279; sequence QKNILSTIIDINGIWQGIQDFVA. Catalysis depends on His282, which acts as the Charge relay system. 2 cysteine pairs are disulfide-bonded: Cys304–Cys315 and Cys318–Cys323. Residues Asn353, Asn399, and Asn455 are each glycosylated (N-linked (GlcNAc...) asparagine). A PLAT domain is found at 357–469; the sequence is WRYRVSVTLA…ENALQTLYPC (113 aa). The cysteines at positions 453 and 469 are disulfide-linked.

The protein belongs to the AB hydrolase superfamily. Lipase family.

The protein resides in the secreted. Its subcellular location is the zymogen granule membrane. It localises to the cell projection. The protein localises to the neuron projection. The enzyme catalyses a triacylglycerol + H2O = a diacylglycerol + a fatty acid + H(+). The catalysed reaction is a 1,2-diacyl-3-O-(beta-D-galactosyl)-sn-glycerol + 2 H2O = 3-beta-D-galactosyl-sn-glycerol + 2 a fatty acid + 2 H(+). It catalyses the reaction 1,2,3-tri-(9Z-octadecenoyl)-glycerol + H2O = di-(9Z)-octadecenoylglycerol + (9Z)-octadecenoate + H(+). It carries out the reaction di-(9Z)-octadecenoylglycerol + H2O = (9Z-octadecenoyl)-glycerol + (9Z)-octadecenoate + H(+). The enzyme catalyses (9Z-octadecenoyl)-glycerol + H2O = glycerol + (9Z)-octadecenoate + H(+). The catalysed reaction is 1-(9Z-octadecenoyl)-glycerol + H2O = glycerol + (9Z)-octadecenoate + H(+). It catalyses the reaction 1,2,3-tripropanoylglycerol + H2O = dipropanoylglycerol + propanoate + H(+). It carries out the reaction 1,2,3-tributanoylglycerol + H2O = dibutanoylglycerol + butanoate + H(+). The enzyme catalyses 1,2,3-trioctanoylglycerol + H2O = dioctanoylglycerol + octanoate + H(+). The catalysed reaction is 1,2-didecanoylglycerol + H2O = decanoylglycerol + decanoate + H(+). It catalyses the reaction long chain 1,2-diacyl-3-O-beta-D-galactosyl-sn-glycerol + H2O = long chain acyl-3-O-beta-D-galactosyl-sn-glycerol + a fatty acid + H(+). It carries out the reaction 1,2-dioctanoyl-3-O-beta-D-galactosyl-sn-glycerol + H2O = octanoyl-3-(beta-D-galactosyl)-sn-glycerol + octanoate + H(+). The enzyme catalyses 1,2-didodecanoyl-3-beta-D-galactosyl-sn-glycerol + H2O = dodecanoyl-3-beta-D-galactosyl-sn-glycerol + dodecanoate + H(+). The catalysed reaction is 1-beta-D-galactosyl-2,3-didodecanoyl-sn-glycerol + H2O = 1-beta-D-galactosyl-dodecanoyl-sn-glycerol + dodecanoate + H(+). It catalyses the reaction a 1,2-diacyl-3-O-[alpha-D-galactosyl-(1-&gt;6)-beta-D-galactosyl]-sn-glycerol + H2O = acyl-3-O-[alpha-D-galactosyl-(1-&gt;6)-beta-D-galactosyl]-sn-glycerol + a fatty acid + H(+). It carries out the reaction long chain 1,2-diacyl-3-O-[alpha-D-galactosyl-(1-&gt;6)-beta-D-galactosyl]-sn-glycerol + H2O = long chain acyl-3-O-[alpha-D-galactosyl-(1-&gt;6)-beta-D-galactosyl]-sn-glycerol + a fatty acid + H(+). The enzyme catalyses 1,2-dioctanoyl-3-O-[alpha-D-galactosyl-(1-&gt;6)-beta-D-galactosyl]-sn-glycerol + H2O = octanoyl-3-O-[alpha-D-galactosyl-(1-&gt;6)-beta-D-galactosyl]-sn-glycerol + octanoate + H(+). The catalysed reaction is 1,2-didodecanoyl-3-O-[alpha-D-galactosyl-(1-&gt;6)-beta-D-galactosyl]-sn-glycerol + H2O = dodecanoyl-3-O-[alpha-D-galactosyl-(1-&gt;6)-beta-D-galactosyl]-sn-glycerol + dodecanoate + H(+). It catalyses the reaction a 1,2-diacyl-sn-glycero-3-phosphocholine + H2O = a monoacyl-sn-glycero-3-phosphocholine + a fatty acid + H(+). Its pathway is glycerolipid metabolism; triacylglycerol degradation. The protein operates within glycolipid metabolism. Functionally, lipase that primarily hydrolyzes triglycerides and galactosylglycerides. In neonates, may play a major role in pancreatic digestion of dietary fats such as milk fat globules enriched in long-chain triglycerides. Hydrolyzes short-, medium- and long-chain fatty acyls in triglycerides without apparent positional specificity. Can completely deacylate triacylglycerols. When the liver matures and bile salt synthesis increases, likely functions mainly as a galactolipase and monoacylglycerol lipase. Hydrolyzes monogalactosyldiglycerols (MGDG) and digalactosyldiacylglycerols (DGDG) present in a plant-based diet, releasing long-chain polyunsaturated fatty acids. Hydrolyzes medium- and long-chain fatty acyls in galactolipids. May act together with LIPF to hydrolyze partially digested triglycerides. Hydrolyzes long-chain monoglycerides with high efficiency. In cytotoxic T cells, contributes to perforin-dependent cell lysis, but is unlikely to mediate direct cytotoxicity. Also has low phospholipase activity. In neurons, required for the localization of the phospholipid 1-oleoyl-2-palmitoyl-PC (OPPC) to neurite tips through acyl chain remodeling of membrane phospholipids. The resulting OPPC-rich lipid membrane domain recruits the t-SNARE protein STX4 by selectively interacting with the STX4 transmembrane domain and this promotes surface expression of the dopamine transporter SLC6A3/DAT at neurite tips by facilitating fusion of SLC6A3-containing transport vesicles with the plasma membrane. The protein is Pancreatic lipase-related protein 2 of Bos taurus (Bovine).